Reading from the N-terminus, the 177-residue chain is Endoribonuclease YbeY (177 aa).

3 residues coordinate Zn(2+): histidine 142, histidine 146, and histidine 152.

The protein belongs to the endoribonuclease YbeY family. It depends on Zn(2+) as a cofactor.

The protein localises to the cytoplasm. Functionally, single strand-specific metallo-endoribonuclease involved in late-stage 70S ribosome quality control and in maturation of the 3' terminus of the 16S rRNA. The chain is Endoribonuclease YbeY from Synechococcus sp. (strain CC9311).